The following is a 991-amino-acid chain: Polyribonucleotide nucleotidyltransferase 2, mitochondrial (991 aa).

A mitochondrion-targeting transit peptide spans 1–39 (MSSIVNRASSASLPNFLAWRALGFRTICSGRLGFAPSVP). A KH domain is found at 609–667 (PRLATLKYSNDSLRTLIGPMGVLKRKIEVETGARLSIDNGTLTIVAKNQDVMEKAQEQV). The S1 motif 1 domain maps to 678–746 (GGVYKGTVSS…VRGNIKLSRK (69 aa)). The interval 813-865 (EAEKSSPVNDNDKPRRAATSKPDRKPKSTASKLIATQKEEEALESIAPEETSA) is disordered. Basic and acidic residues predominate over residues 822-838 (DNDKPRRAATSKPDRKP). Residues 925–987 (GTEMTATVDH…GVPVMALVDE (63 aa)) enclose the S1 motif 2 domain.

It belongs to the polyribonucleotide nucleotidyltransferase family.

It localises to the mitochondrion. The catalysed reaction is RNA(n+1) + phosphate = RNA(n) + a ribonucleoside 5'-diphosphate. Its function is as follows. Involved in the 3'-end maturation of mitochondrial mRNAs, rRNAs and tRNAs. Functions as a poly(A) mRNA 3'-5' degrading phosphorylase and is required for the degradation of highly expressed transcripts of non-coding regions. The protein is Polyribonucleotide nucleotidyltransferase 2, mitochondrial (PNP2) of Arabidopsis thaliana (Mouse-ear cress).